The sequence spans 258 residues: Lysine-rich coiled-coil protein 1 (258 aa).

A disordered region spans residues 142 to 258 (DNSTSTHQAS…MLWDQSILGF (117 aa)). Basic residues predominate over residues 150 to 161 (ASHKQIHQKRKR). Basic and acidic residues-rich tracts occupy residues 162–175 (HPEEGREKSEEEWS), 183–213 (CKEIDLDKHKSIQRKKTEVEIETVHVSTEKL), and 220–232 (KGRDVVSKKEERK). Residues 211–248 (EKLKNRKEKKGRDVVSKKEERKRTKKKKEQGQERTEEE) are a coiled coil.

The chain is Lysine-rich coiled-coil protein 1 (KRCC1) from Pongo abelii (Sumatran orangutan).